Here is a 606-residue protein sequence, read N- to C-terminus: Sodium-independent sulfate anion transporter (606 aa).

The Extracellular segment spans residues 1–51; the sequence is MPSSVTALGQARSSGPGMAPSACCCSPAALQRRLPILAWLPSYSLQWLKMD. Residues 52–72 form a helical membrane-spanning segment; sequence FVAGLSVGLTAIPQALAYAEV. A topological domain (cytoplasmic) is located at residue Ala73. A helical transmembrane segment spans residues 74-94; it reads GLPPQYGLYSAFMGCFVYFFL. The Extracellular segment spans residues 95-100; sequence GTSRDV. A helical transmembrane segment spans residues 101 to 117; the sequence is TLGPTAIMSLLVSFYTF. Residues 118-119 are Cytoplasmic-facing; the sequence is HE. The chain crosses the membrane as a helical span at residues 120-140; that stretch reads PAYAVLLAFLSGCIQLAMGVL. At 141 to 147 the chain is on the extracellular side; the sequence is RLGFLLD. The helical transmembrane segment at 148 to 168 threads the bilayer; it reads FISYPVIKGFTSAAAVTIGFG. Over 169–197 the chain is Cytoplasmic; that stretch reads QIKNLLGLQNIPRPFFLQVYHTFLRIAET. Residues 198–218 form a helical membrane-spanning segment; it reads RVGDAVLGLVCMLLLLVLKLM. At 219–250 the chain is on the extracellular side; that stretch reads RDHVPPVHPEMPPGVRLSRGLVWAATTARNAL. Residues 251–271 form a helical membrane-spanning segment; the sequence is VVSFAALVAYSFEVTGYQPFI. Residues 272 to 307 lie on the Cytoplasmic side of the membrane; that stretch reads LTGETAEGLPPVRIPPFSVTTANGTISFTEMVQDMG. The helical transmembrane segment at 308 to 328 threads the bilayer; sequence AGLAVVPLMGLLESIAVAKAF. The Extracellular segment spans residues 329–341; that stretch reads ASQNNYRIDANQE. A helical membrane pass occupies residues 342 to 362; the sequence is LLAIGLTNMLGSLVSSYPVTG. Topologically, residues 363-374 are cytoplasmic; it reads SFGRTAVNAQSG. A helical transmembrane segment spans residues 375 to 395; that stretch reads VCTPAGGLVTGVLVLLSLDYL. Topologically, residues 396 to 398 are extracellular; it reads TSL. Residues 399-419 form a helical membrane-spanning segment; that stretch reads FYYIPKSALAAVIIMAVAPLF. At 420-441 the chain is on the cytoplasmic side; the sequence is DTKIFRTLWRVKRLDLLPLCVT. The helical transmembrane segment at 442 to 462 threads the bilayer; that stretch reads FLLCFWEVQYGILAGALVSLL. At 463-606 the chain is on the extracellular side; the sequence is MLLHSAARPE…LDQKVALLKA (144 aa). The STAS domain occupies 470–584; that stretch reads RPETKVSEGP…EAEKHLRQEP (115 aa).

This sequence belongs to the SLC26A/SulP transporter (TC 2.A.53) family. In terms of tissue distribution, detected in all tissues tested with highest expression observed in brain, kidney, HEVEC and placenta and lowest in pancreas, skeletal muscle, liver, lung and heart.

The protein resides in the cell membrane. Its subcellular location is the lysosome membrane. It localises to the apical cell membrane. It is found in the basolateral cell membrane. It catalyses the reaction hydrogencarbonate(in) + chloride(out) = hydrogencarbonate(out) + chloride(in). It carries out the reaction sulfate(in) + H(+)(in) = sulfate(out) + H(+)(out). The catalysed reaction is oxalate(in) + chloride(out) = oxalate(out) + chloride(in). Functionally, sodium-independent anion exchanger mediating bicarbonate, chloride, sulfate and oxalate transport. Exhibits sodium-independent sulfate anion transporter activity that may cooperate with SLC26A2 to mediate DIDS-sensitive sulfate uptake into high endothelial venules endothelial cells (HEVEC). In the kidney, mediates chloride-bicarbonate exchange, facilitating V-ATPase-mediated acid secretion. May function as a chloride channel, playing an important role in moderating chloride homeostasis and neuronal activity in the cerebellum. The sequence is that of Sodium-independent sulfate anion transporter from Homo sapiens (Human).